The sequence spans 457 residues: Peptidyl-prolyl cis-trans isomerase FKBP5 (457 aa).

Met1 carries the N-acetylmethionine modification. The segment at 1–26 (MTTDEGAKNSRGNPAATVAEQGEDVT) is disordered. Lys28 bears the N6-acetyllysine mark. PPIase FKBP-type domains are found at residues 50-138 (GDRV…LDFK) and 165-251 (GARV…KSFE). TPR repeat units follow at residues 268-301 (AAIV…LEME), 317-350 (LAAF…DSAN), and 351-384 (EKGL…NPQN). A disordered region spans residues 421–457 (AKEEANKAMSKKTSEGVTNEKLTASHAVEEEKPEGHV). Position 445 is a phosphoserine (Ser445). A compositionally biased stretch (basic and acidic residues) spans 447–457 (AVEEEKPEGHV).

As to quaternary structure, part of a heteromultimeric cytoplasmic complex with HSP90AA1, HSPA1A/HSPA1B and steroid receptors. Upon ligand binding dissociates from the complex and FKBP4 takes its place. Interacts with functionally mature heterooligomeric progesterone receptor complexes along with HSP90 and TEBP. Interacts with NR3C1. Interacts with Akt/AKT1 and PHLPP1; enhancing dephosphorylation and subsequent activation of Akt/AKT1. Interacts with IFI44L; this interaction modulates the kinase activity of IKBKB and IKBKE. Interacts with IKBKB and IKBKE. Acetylation impairs ability to promote interaction between Akt/AKT1 and PHLPP1. Deacetylation by SIRT7 promotes interaction between Akt/AKT1 and PHLPP1, leading to suppress Akt/AKT1 activation. In terms of processing, ubiquitinated, leading to degradation in a proteasome-dependent manner. Deubiquitinated by USP49, leading to stabilization.

The protein localises to the cytoplasm. It localises to the nucleus. The catalysed reaction is [protein]-peptidylproline (omega=180) = [protein]-peptidylproline (omega=0). Its activity is regulated as follows. Inhibited by both FK506 and rapamycin. In terms of biological role, immunophilin protein with PPIase and co-chaperone activities. Component of unligated steroid receptors heterocomplexes through interaction with heat-shock protein 90 (HSP90). Plays a role in the intracellular trafficking of heterooligomeric forms of steroid hormone receptors maintaining the complex into the cytoplasm when unliganded. Acts as a regulator of Akt/AKT1 activity by promoting the interaction between Akt/AKT1 and PHLPP1, thereby enhancing dephosphorylation and subsequent activation of Akt/AKT1. Interacts with IKBKE and IKBKB which facilitates IKK complex assembly leading to increased IKBKE and IKBKB kinase activity, NF-kappaB activation, and IFN production. The protein is Peptidyl-prolyl cis-trans isomerase FKBP5 (FKBP5) of Saimiri boliviensis boliviensis (Bolivian squirrel monkey).